Here is a 102-residue protein sequence, read N- to C-terminus: Aspartyl/glutamyl-tRNA(Asn/Gln) amidotransferase subunit C (102 aa).

The protein belongs to the GatC family. In terms of assembly, heterotrimer of A, B and C subunits.

The catalysed reaction is L-glutamyl-tRNA(Gln) + L-glutamine + ATP + H2O = L-glutaminyl-tRNA(Gln) + L-glutamate + ADP + phosphate + H(+). It catalyses the reaction L-aspartyl-tRNA(Asn) + L-glutamine + ATP + H2O = L-asparaginyl-tRNA(Asn) + L-glutamate + ADP + phosphate + 2 H(+). Functionally, allows the formation of correctly charged Asn-tRNA(Asn) or Gln-tRNA(Gln) through the transamidation of misacylated Asp-tRNA(Asn) or Glu-tRNA(Gln) in organisms which lack either or both of asparaginyl-tRNA or glutaminyl-tRNA synthetases. The reaction takes place in the presence of glutamine and ATP through an activated phospho-Asp-tRNA(Asn) or phospho-Glu-tRNA(Gln). The sequence is that of Aspartyl/glutamyl-tRNA(Asn/Gln) amidotransferase subunit C from Lactobacillus acidophilus (strain ATCC 700396 / NCK56 / N2 / NCFM).